The primary structure comprises 276 residues: Large ribosomal subunit protein uL2 (276 aa).

Residues 224 to 265 form a disordered region; the sequence is VMNPVDHPHGGGEGRTASGRHPVSPWGLPTKGYKTRNNKRTD.

The protein belongs to the universal ribosomal protein uL2 family. Part of the 50S ribosomal subunit. Forms a bridge to the 30S subunit in the 70S ribosome.

One of the primary rRNA binding proteins. Required for association of the 30S and 50S subunits to form the 70S ribosome, for tRNA binding and peptide bond formation. It has been suggested to have peptidyltransferase activity; this is somewhat controversial. Makes several contacts with the 16S rRNA in the 70S ribosome. In Dichelobacter nodosus (strain VCS1703A), this protein is Large ribosomal subunit protein uL2.